The chain runs to 194 residues: Protein GrpE (194 aa).

A compositionally biased stretch (basic and acidic residues) spans 1 to 12 (MNKQKNNRERTP). Positions 1–44 (MNKQKNNRERTPQPEQDTERDEQLTNSHENDIDSAPAAEENDKV) are disordered.

It belongs to the GrpE family. Homodimer.

It is found in the cytoplasm. Functionally, participates actively in the response to hyperosmotic and heat shock by preventing the aggregation of stress-denatured proteins, in association with DnaK and GrpE. It is the nucleotide exchange factor for DnaK and may function as a thermosensor. Unfolded proteins bind initially to DnaJ; upon interaction with the DnaJ-bound protein, DnaK hydrolyzes its bound ATP, resulting in the formation of a stable complex. GrpE releases ADP from DnaK; ATP binding to DnaK triggers the release of the substrate protein, thus completing the reaction cycle. Several rounds of ATP-dependent interactions between DnaJ, DnaK and GrpE are required for fully efficient folding. The protein is Protein GrpE of Porphyromonas gingivalis (strain ATCC 33277 / DSM 20709 / CIP 103683 / JCM 12257 / NCTC 11834 / 2561).